The sequence spans 504 residues: Putative BTB/POZ domain-containing protein R842 (504 aa).

Positions 21-91 (SDVKLILKDN…FYGFKSPSVT (71 aa)) constitute a BTB domain.

The protein belongs to the mimivirus BTB/WD family.

The chain is Putative BTB/POZ domain-containing protein R842 from Acanthamoeba polyphaga (Amoeba).